Consider the following 332-residue polypeptide: Stage II sporulation protein B (332 aa).

Residues 1–10 (MKKRKNKKNS) show a composition bias toward basic residues. The segment at 1-71 (MKKRKNKKNS…EHPDEDEFNW (71 aa)) is disordered. The span at 11–27 (KAAEKALKVTINGKEET) shows a compositional bias: basic and acidic residues. The helical transmembrane segment at 112-132 (AATIAFAAVIGTGLGLFALNI) threads the bilayer. The interval 139-174 (SAPASLEDSLGSQTAKAGDTSADKQTSGAEKQAAQT) is disordered. Residues 161-174 (DKQTSGAEKQAAQT) are compositionally biased toward polar residues. Positions 175–250 (EGTYKTYAVQ…SDFEAWGGKE (76 aa)) constitute an SPOR domain.

It is found in the cell membrane. Appears to be degraded early in engulfment, in correlation with its loss from polar septa. Functionally, facilitates the rapid and spatially regulated dissolution of septal peptidoglycan. The polypeptide is Stage II sporulation protein B (Bacillus subtilis (strain 168)).